Here is a 290-residue protein sequence, read N- to C-terminus: ATP synthase gamma chain (290 aa).

It belongs to the ATPase gamma chain family. In terms of assembly, F-type ATPases have 2 components, CF(1) - the catalytic core - and CF(0) - the membrane proton channel. CF(1) has five subunits: alpha(3), beta(3), gamma(1), delta(1), epsilon(1). CF(0) has three main subunits: a, b and c.

It localises to the cell inner membrane. Functionally, produces ATP from ADP in the presence of a proton gradient across the membrane. The gamma chain is believed to be important in regulating ATPase activity and the flow of protons through the CF(0) complex. The protein is ATP synthase gamma chain of Bradyrhizobium diazoefficiens (strain JCM 10833 / BCRC 13528 / IAM 13628 / NBRC 14792 / USDA 110).